A 305-amino-acid chain; its full sequence is 4-diphosphocytidyl-2-C-methyl-D-erythritol kinase (305 aa).

K10 is a catalytic residue. 95 to 105 (PVTAGLGGGSS) is a binding site for ATP. The active site involves D136. Residues 286–305 (PGVTPWRSPRSASSPSTKRS) are disordered. The segment covering 290–305 (PWRSPRSASSPSTKRS) has biased composition (low complexity).

The protein belongs to the GHMP kinase family. IspE subfamily.

It catalyses the reaction 4-CDP-2-C-methyl-D-erythritol + ATP = 4-CDP-2-C-methyl-D-erythritol 2-phosphate + ADP + H(+). The protein operates within isoprenoid biosynthesis; isopentenyl diphosphate biosynthesis via DXP pathway; isopentenyl diphosphate from 1-deoxy-D-xylulose 5-phosphate: step 3/6. Functionally, catalyzes the phosphorylation of the position 2 hydroxy group of 4-diphosphocytidyl-2C-methyl-D-erythritol. The sequence is that of 4-diphosphocytidyl-2-C-methyl-D-erythritol kinase from Anaeromyxobacter sp. (strain Fw109-5).